Here is a 739-residue protein sequence, read N- to C-terminus: Polyphosphate kinase (739 aa).

A disordered region spans residues 22–45 (WHSDNSALAAPPAATTSASQDQLP). Residues 27-40 (SALAAPPAATTSAS) are compositionally biased toward low complexity. Asn87 contacts ATP. Positions 428 and 458 each coordinate Mg(2+). Residue His488 is the Phosphohistidine intermediate of the active site. Positions 521, 621, and 649 each coordinate ATP. Positions 714-739 (QWTASPQKGQQVRDHQESLMERHRSR) are disordered. Over residues 724 to 739 (QVRDHQESLMERHRSR) the composition is skewed to basic and acidic residues.

The protein belongs to the polyphosphate kinase 1 (PPK1) family. It depends on Mg(2+) as a cofactor. In terms of processing, an intermediate of this reaction is the autophosphorylated ppk in which a phosphate is covalently linked to a histidine residue through a N-P bond.

The catalysed reaction is [phosphate](n) + ATP = [phosphate](n+1) + ADP. Functionally, catalyzes the reversible transfer of the terminal phosphate of ATP to form a long-chain polyphosphate (polyP). The protein is Polyphosphate kinase of Mycobacterium leprae (strain TN).